The chain runs to 1615 residues: MATLPRAAAAAAPSPAAALLPLPRAAPLLAGRAAARSAARRLRARGTRAPPLAAARRGWGGVSPRAVLDLPRRREAAEKPAQKAADLNEILSERGACGVGFVANLKNEPSFNIVRDALVALGCMEHRGGCGADNDSGDGSGLMSGIPWDLFNDWANKQGLAPLDRTNTGVGMVFLPQDENSMEEAKAVVAKVFTDEGLEVLGWRTVPFNVSVVGRYAKETMPNIQQIFVKVAKEDNADDIERELYICRKLIERATKSASWADELYFCSLSSRTIVYKGMLRSEILGQFYLDLQNELYKSPFAIYHRRYSTNTSPRWPLAQPMRLLGHNGEINTIQGNLNWMRSREATLQSPVWRGREHEIRPFGDPKASDSANLDSTAELLLRSGRSPAEAMMILVPEAYKNHPTLSIKYPEVIDFYDYYKGQMEAWDGPALLLFSDGRTVGACLDRNGLRPARYWRTSDDFVYVASEVGVIPMDESKVVMKGRLGPGMMITVDLQTGQVLENTEVKKSVASANPYGSWLQQSTRSIKPVNFQSSVAMDNETVLRHQQAFGYSSEDVQMVIETMASQGKEPTFCMGDDIPLAVLSQKPHMLFDYFKQRFAQVTNPAIDPLREGLVMSLEVNIGKRRNILEVGPENADQVTLSSPVLNEGELESLLNDSKLKPKVLSTYFDIRKGLDGSLDKAIKVLCDEADAAVRNGSQLLVLSDRSEALEPTRPAIPILLAVGAIHQHLIQNGLRMSASIVADTAQCFSTHQFACLIGYGASAICPYLALETCRQWRLSNKTVNLMRNGKMPTVTIEQAQRNFIKAVKSGLLKILSKMGISLLSSYCGAQIFEIYGLGQEVVDLAFCGSVSKIGGLTLDELGRETLSFWVKAFSEDTAKRLENFGFIQSRPGGEYHANNPEMSKLLHKAVREKSDNAYTVYQQHLASRPVNVLRDLLELKSDRAPIPIGKVEPATSIVERFCTGGMSLGAISRETHEAIAIAMNRIGGKSNSGEGGEDPIRWSPLADVEDGYSPTLPHLKGLQNGDTATSAIKQVASGRFGVTPTFLVNAEQIEIKIAQGAKPGEGGQLPGKKVSAYIARLRNSKPGVPLISPPPHHDIYSIEDLAQLIYDLHQINPKAKVSVKLVAEAGIGTVASGVSKGNADIIQISGHDGGTGASPISSIKHAGGPWELGLSETHQTLIQNGLRERVVLRVDGGFRSGLDVLMAAAMGADEYGFGSVAMIATGCVMARICHTNNCPVGVASQREELRARFPGVPGDLVNYFLFVAEEVRATLAQLGFEKLDDIIGRTDILKAKHVSLAKTQHIDLKYLLSSAGLPKWSSSQIRSQDVHSNGPVLDETILADPDISDAIENEKEVSKTFQIYNVDRAVCGRVAGVIAKKYGDTGFAGQLNITFTGSAGQSFGCFLTPGMNIRLVGEANDYVGKGMAGGELVVVPVEKTGFVPEDAAIVGNTCLYGATGGQVFVRGKTGERFAVRNSLGQAVVEGTGDHCCEYMTGGCVVVLGKVGRNVAAGMTGGLAYILDEDDTLVPKVNKEIVKMQRVNAPAGQMQLKGLIEAYVEKTGSEKGATILREWEAYLPLFWQLVPPSEEDSPEACAEFERVLAKQATTVQSAK.

A chloroplast-targeting transit peptide spans 1 to 52 (MATLPRAAAAAAPSPAAALLPLPRAAPLLAGRAAARSAARRLRARGTRAPPL). Residue Cys97 is the Nucleophile of the active site. The 400-residue stretch at 97–496 (CGVGFVANLK…PGMMITVDLQ (400 aa)) folds into the Glutamine amidotransferase type-2 domain. Position 1175–1232 (1175–1232 (LSETHQTLIQNGLRERVVLRVDGGFRSGLDVLMAAAMGADEYGFGSVAMIATGCVMAR)) interacts with FMN. 3 residues coordinate [3Fe-4S] cluster: Cys1228, Cys1234, and Cys1239.

Belongs to the glutamate synthase family. It depends on [3Fe-4S] cluster as a cofactor. The cofactor is FAD. Requires FMN as cofactor. As to expression, expressed in leaf blades and at lower levels in roots.

The protein localises to the plastid. Its subcellular location is the chloroplast. The catalysed reaction is 2 oxidized [2Fe-2S]-[ferredoxin] + 2 L-glutamate = L-glutamine + 2 reduced [2Fe-2S]-[ferredoxin] + 2-oxoglutarate + 2 H(+). It functions in the pathway amino-acid biosynthesis; L-glutamate biosynthesis via GLT pathway; L-glutamate from 2-oxoglutarate and L-glutamine (ferredoxin route): step 1/1. It participates in energy metabolism; nitrogen metabolism. In terms of biological role, involved in glutamate biosynthesis in leaf. Required for the reassimilation of ammonium ions generated during photorespiration. This is Ferredoxin-dependent glutamate synthase, chloroplastic (GLU) from Oryza sativa subsp. japonica (Rice).